A 163-amino-acid polypeptide reads, in one-letter code: Small ribosomal subunit protein uS9 (163 aa).

The segment covering 1–25 has biased composition (low complexity); sequence MAENTNNSAVTETEETTAAFTTETN. The tract at residues 1-40 is disordered; it reads MAENTNNSAVTETEETTAAFTTETNSGAGTGTSTIAPGYG.

The protein belongs to the universal ribosomal protein uS9 family.

The polypeptide is Small ribosomal subunit protein uS9 (Bifidobacterium animalis subsp. lactis (strain AD011)).